The primary structure comprises 206 residues: Large ribosomal subunit protein uL4 (206 aa).

Residues 49-73 (KTKTISEISGTTKKPFAQKGGGRAR) are disordered.

The protein belongs to the universal ribosomal protein uL4 family. Part of the 50S ribosomal subunit.

Functionally, one of the primary rRNA binding proteins, this protein initially binds near the 5'-end of the 23S rRNA. It is important during the early stages of 50S assembly. It makes multiple contacts with different domains of the 23S rRNA in the assembled 50S subunit and ribosome. Forms part of the polypeptide exit tunnel. This Paramagnetospirillum magneticum (strain ATCC 700264 / AMB-1) (Magnetospirillum magneticum) protein is Large ribosomal subunit protein uL4.